Here is a 106-residue protein sequence, read N- to C-terminus: Iron-sulfur cluster assembly protein CyaY (106 aa).

This sequence belongs to the frataxin family.

Involved in iron-sulfur (Fe-S) cluster assembly. May act as a regulator of Fe-S biogenesis. This chain is Iron-sulfur cluster assembly protein CyaY, found in Yersinia pestis bv. Antiqua (strain Antiqua).